A 487-amino-acid polypeptide reads, in one-letter code: N-succinylglutamate 5-semialdehyde dehydrogenase (487 aa).

An NAD(+)-binding site is contributed by 221 to 226 (GSSDTG). Residues Glu244 and Cys278 contribute to the active site.

The protein belongs to the aldehyde dehydrogenase family. AstD subfamily.

The catalysed reaction is N-succinyl-L-glutamate 5-semialdehyde + NAD(+) + H2O = N-succinyl-L-glutamate + NADH + 2 H(+). It participates in amino-acid degradation; L-arginine degradation via AST pathway; L-glutamate and succinate from L-arginine: step 4/5. Its function is as follows. Catalyzes the NAD-dependent reduction of succinylglutamate semialdehyde into succinylglutamate. The polypeptide is N-succinylglutamate 5-semialdehyde dehydrogenase (Burkholderia cenocepacia (strain ATCC BAA-245 / DSM 16553 / LMG 16656 / NCTC 13227 / J2315 / CF5610) (Burkholderia cepacia (strain J2315))).